The chain runs to 299 residues: Recombination-associated protein RdgC (299 aa).

Belongs to the RdgC family.

It localises to the cytoplasm. The protein localises to the nucleoid. May be involved in recombination. The protein is Recombination-associated protein RdgC of Neisseria meningitidis serogroup B (strain ATCC BAA-335 / MC58).